A 60-amino-acid chain; its full sequence is Probable tautomerase SP_1017 (60 aa).

Pro2 functions as the Proton acceptor; via imino nitrogen in the catalytic mechanism.

Belongs to the 4-oxalocrotonate tautomerase family.

This chain is Probable tautomerase SP_1017, found in Streptococcus pneumoniae serotype 4 (strain ATCC BAA-334 / TIGR4).